The chain runs to 78 residues: Small ribosomal subunit protein uS15 (78 aa).

The protein belongs to the universal ribosomal protein uS15 family. As to quaternary structure, part of the 30S ribosomal subunit. Forms a bridge to the 50S subunit in the 70S ribosome, contacting the 23S rRNA.

In terms of biological role, one of the primary rRNA binding proteins, it binds directly to 16S rRNA where it helps nucleate assembly of the platform of the 30S subunit by binding and bridging several RNA helices of the 16S rRNA. Forms an intersubunit bridge (bridge B4) with the 23S rRNA of the 50S subunit in the ribosome. This chain is Small ribosomal subunit protein uS15, found in Karelsulcia muelleri (strain GWSS) (Sulcia muelleri).